Consider the following 152-residue polypeptide: Ribosome maturation factor RimP (152 aa).

Belongs to the RimP family.

The protein resides in the cytoplasm. In terms of biological role, required for maturation of 30S ribosomal subunits. The protein is Ribosome maturation factor RimP of Ruminiclostridium cellulolyticum (strain ATCC 35319 / DSM 5812 / JCM 6584 / H10) (Clostridium cellulolyticum).